Here is a 797-residue protein sequence, read N- to C-terminus: MSAKSRRPGTASSQTPNECVQVVVRCRPMSNRERSEGSPEVVNVYPNRGVVELQNVVDANKEQRKVFTYDAAYDASASQTTLYHEVVFPLVSSVLEGFNGCIFAYGQTGTGKTFTMEGVRGNDDLMGIIPRTFEQIWLHINRTENFQFLVDVSYLEIYMEELRDLLKPNSKHLEVRERGSGVYVPNLHAINCKSVDDMIRVMKVGNKNRTVGFTNMNEHSSRSHAIFMIKIEMCDTETNTIKVGKLNLIDLAGSERQSKTGASAERLKEASKINLALSSLGNVISALAESSPHVPYRDSKLTRLLQDSLGGNSKTIMIANIGPSNYNYNETLTTLRYASRAKSIQNQPIKNEDPQDAKLKEYQEEIERLKRLIAPQQQQRSEKQGTIKKQRVKKPKKEPISQELIGSALQASSADLQVDEDRDSDGDGAESESDKENEAEVAKSNEELERERVENAKLAAKLAELEGQLVRGGKNLLDTYSERQIELEKKLVEIAERKKREIEIQQQLELQEETTLEIRERNVSLEQEVELKKRKLSKCYAKYLALQQELNDCKHDHNQDLRELEMAQNELVKELKRQLLIIDNFVPIEVKQRLYTQAKYDEEQEEWKFSSFPLPLPPSGGDGRQGYRRPVSHPQRRRPTSEHALQEAKSNAPSSLRFKSENIVSYELEMPCRTTQEYRTPKVSASLQAVLAQAMQTGGDDIDIVDSHTNSLRSRLENIINANSSSNGGPGSGAGPLAANTAGSGVGSMPNVRNIKSSRGLPSAGTALDSNRRPPTGRIPAKKPASAYPKARGLVNK.

The region spanning 19-344 is the Kinesin motor domain; sequence CVQVVVRCRP…LRYASRAKSI (326 aa). 106–113 contacts ATP; that stretch reads GQTGTGKT. Residues 350-384 adopt a coiled-coil conformation; it reads KNEDPQDAKLKEYQEEIERLKRLIAPQQQQRSEKQ. Disordered stretches follow at residues 371-450, 610-656, and 722-797; these read RLIA…ELER, SSFP…PSSL, and ANSS…LVNK. Residues 386-396 show a composition bias toward basic residues; it reads TIKKQRVKKPK. The span at 417–431 shows a compositional bias: acidic residues; the sequence is QVDEDRDSDGDGAES. Residues 432–450 are compositionally biased toward basic and acidic residues; that stretch reads ESDKENEAEVAKSNEELER. Residues 432 to 580 are a coiled coil; it reads ESDKENEAEV…LVKELKRQLL (149 aa). A compositionally biased stretch (basic residues) spans 626–638; sequence GYRRPVSHPQRRR. Positions 782–791 are enriched in low complexity; the sequence is KKPASAYPKA.

This sequence belongs to the TRAFAC class myosin-kinesin ATPase superfamily. Kinesin family. Kinesin II subfamily.

It is found in the cytoplasm. The protein resides in the cytoskeleton. Plus-end directed microtubule motor that may be used for anterograde axonal transport and could conceivably move cargos in fly neurons different than those moved by kinesin heavy chain or other plus-end directed motors. This chain is Kinesin-like protein Klp68D, found in Drosophila pseudoobscura pseudoobscura (Fruit fly).